Consider the following 326-residue polypeptide: 4-hydroxythreonine-4-phosphate dehydrogenase (326 aa).

T132 contributes to the substrate binding site. Residues H160, H205, and H260 each coordinate a divalent metal cation. Substrate contacts are provided by K268, N277, and R286.

It belongs to the PdxA family. In terms of assembly, homodimer. Zn(2+) serves as cofactor. Mg(2+) is required as a cofactor. It depends on Co(2+) as a cofactor.

It localises to the cytoplasm. The catalysed reaction is 4-(phosphooxy)-L-threonine + NAD(+) = 3-amino-2-oxopropyl phosphate + CO2 + NADH. The protein operates within cofactor biosynthesis; pyridoxine 5'-phosphate biosynthesis; pyridoxine 5'-phosphate from D-erythrose 4-phosphate: step 4/5. Catalyzes the NAD(P)-dependent oxidation of 4-(phosphooxy)-L-threonine (HTP) into 2-amino-3-oxo-4-(phosphooxy)butyric acid which spontaneously decarboxylates to form 3-amino-2-oxopropyl phosphate (AHAP). The chain is 4-hydroxythreonine-4-phosphate dehydrogenase from Stenotrophomonas maltophilia (strain K279a).